Here is a 254-residue protein sequence, read N- to C-terminus: UPF0173 protein YddR (254 aa).

The protein belongs to the UPF0173 family.

In Bacillus subtilis (strain 168), this protein is UPF0173 protein YddR (yddR).